The following is a 724-amino-acid chain: Coiled-coil domain-containing protein 175 (724 aa).

Coiled-coil stretches lie at residues 131 to 164, 203 to 256, 282 to 373, 426 to 534, and 565 to 627; these read VEMSELHTKITRINDEIEFLKKKILHLQTDNTAL, INLE…RKET, VVLS…RQYK, ELHR…ERKL, and QLQV…QLRE.

The polypeptide is Coiled-coil domain-containing protein 175 (CCDC175) (Bos taurus (Bovine)).